A 406-amino-acid chain; its full sequence is Probable peptidoglycan glycosyltransferase FtsW (406 aa).

Transmembrane regions (helical) follow at residues 22–42 (LWFVMSLIAILALGIVMVASA), 56–76 (FFMGRQILYLILGVSFGFMML), 86–106 (WGILLMLLSLVLLVLVLVPGI), 116–136 (WINLIVFNLQASEVAKVCMVV), 153–173 (LIGFALPLFLTSLFLIFLLME), 186–206 (VIALLFIGGAPVYQFIAIVIM), 280–300 (IWVEEMGLLGGVVLLSLFALM), 318–338 (FAGYMCFGFAILILAQVIINV), and 352–372 (LPLISYGGSSLIITLGSLFVV). Over residues 383–397 (SKGGESEERKRKSDE) the composition is skewed to basic and acidic residues. The tract at residues 383–406 (SKGGESEERKRKSDESIDDGEALA) is disordered.

This sequence belongs to the SEDS family. FtsW subfamily.

The protein resides in the cell inner membrane. The catalysed reaction is [GlcNAc-(1-&gt;4)-Mur2Ac(oyl-L-Ala-gamma-D-Glu-L-Lys-D-Ala-D-Ala)](n)-di-trans,octa-cis-undecaprenyl diphosphate + beta-D-GlcNAc-(1-&gt;4)-Mur2Ac(oyl-L-Ala-gamma-D-Glu-L-Lys-D-Ala-D-Ala)-di-trans,octa-cis-undecaprenyl diphosphate = [GlcNAc-(1-&gt;4)-Mur2Ac(oyl-L-Ala-gamma-D-Glu-L-Lys-D-Ala-D-Ala)](n+1)-di-trans,octa-cis-undecaprenyl diphosphate + di-trans,octa-cis-undecaprenyl diphosphate + H(+). It functions in the pathway cell wall biogenesis; peptidoglycan biosynthesis. Peptidoglycan polymerase that is essential for cell division. The polypeptide is Probable peptidoglycan glycosyltransferase FtsW (Marinomonas mediterranea (strain ATCC 700492 / JCM 21426 / NBRC 103028 / MMB-1)).